The chain runs to 136 residues: Antistasin (136 aa).

Positions 1–17 (MIKLAILLLFTVAIVRC) are cleaved as a signal peptide. The residue at position 18 (glutamine 18) is a Pyrrolidone carboxylic acid. 10 disulfides stabilise this stretch: cysteine 25–cysteine 36, cysteine 30–cysteine 43, cysteine 45–cysteine 65, cysteine 50–cysteine 68, cysteine 54–cysteine 70, cysteine 79–cysteine 90, cysteine 84–cysteine 97, cysteine 99–cysteine 120, cysteine 105–cysteine 123, and cysteine 109–cysteine 125. The region spanning 45-70 (CSGVRCRMHCPHGFQRSRYGCEFCKC) is the Antistasin-like 1 domain. The Antistasin-like 2 domain occupies 100–125 (KIDINCRKTCPNGLKRDKLGCEYCEC). Residues 114–117 (KRDK) and 128–135 (KRKLIPRL) contribute to the heparin site.

It belongs to the protease inhibitor I15 (antistasin) family.

The protein resides in the secreted. Functionally, this highly disulfide-bonded protein is a potent inhibitor of factor Xa. May have therapeutic utility as an anticoagulant. Also exhibits a strong metastatic activity. This Haementeria officinalis (Mexican leech) protein is Antistasin.